We begin with the raw amino-acid sequence, 634 residues long: Mitochondrial Rho GTPase 1 (634 aa).

Residues 1-604 are Cytoplasmic-facing; the sequence is MLCCMRICVC…PRSEEDVEGK (604 aa). Residues 2–171 enclose the Miro 1 domain; sequence LCCMRICVCG…FFLCQKAVTH (170 aa). Residues 11–18, 60–64, and 116–119 each bind GTP; these read GDEGTGKS, DTSAV, and NKSD. 2 EF-hand domains span residues 187–222 and 307–342; these read AAVAALQRIFYLSDKDRDGYLSDKEIKDFQMRCFEK and EGYRFFVNLFLLSDKDNDGGLNDAELASLFAPTPGL. Positions 200, 202, 204, 206, 211, 320, 322, 324, and 331 each coordinate Ca(2+). Residues 399–419 form a disordered region; the sequence is NPSTTAALKVTRPRKRRKRPG. Residues 409–419 are compositionally biased toward basic residues; it reads TRPRKRRKRPG. Positions 423–589 constitute a Miro 2 domain; that stretch reads RNVVLGHIVG…FVHIAEAAME (167 aa). Residues 432–439, 468–472, and 538–541 each bind GTP; these read GAPGSGKS, ELPGG, and LKAD. The helical; Anchor for type IV membrane protein transmembrane segment at 605–625 threads the bilayer; sequence WMSWGIALGAVVCAGAAAVMI. At 626 to 634 the chain is on the mitochondrial intermembrane side; it reads WRRVSGSGV.

The protein belongs to the mitochondrial Rho GTPase family.

It localises to the mitochondrion outer membrane. In terms of biological role, mitochondrial GTPase involved in mitochondrial trafficking. Probably involved in control of anterograde transport of mitochondria and their subcellular distribution. The protein is Mitochondrial Rho GTPase 1 (gem1) of Emericella nidulans (strain FGSC A4 / ATCC 38163 / CBS 112.46 / NRRL 194 / M139) (Aspergillus nidulans).